Here is a 397-residue protein sequence, read N- to C-terminus: Acetate kinase 2 (397 aa).

Asn-8 contributes to the Mg(2+) binding site. Position 15 (Lys-15) interacts with ATP. Substrate is bound at residue Arg-89. Asp-146 functions as the Proton donor/acceptor in the catalytic mechanism. Residues 206 to 210 (HLGNG), 281 to 283 (DLR), and 329 to 333 (GIGEN) each bind ATP. Residue Glu-382 participates in Mg(2+) binding.

Belongs to the acetokinase family. Homodimer. The cofactor is Mg(2+). Requires Mn(2+) as cofactor.

The protein localises to the cytoplasm. The catalysed reaction is acetate + ATP = acetyl phosphate + ADP. It functions in the pathway metabolic intermediate biosynthesis; acetyl-CoA biosynthesis; acetyl-CoA from acetate: step 1/2. In terms of biological role, catalyzes the formation of acetyl phosphate from acetate and ATP. Can also catalyze the reverse reaction. The protein is Acetate kinase 2 of Listeria monocytogenes serotype 4b (strain F2365).